The sequence spans 129 residues: Large ribosomal subunit protein uL14m (129 aa).

The protein belongs to the universal ribosomal protein uL14 family. As to quaternary structure, component of the mitochondrial ribosome large subunit (39S) which comprises a 16S rRNA and about 50 distinct proteins.

It localises to the mitochondrion. The polypeptide is Large ribosomal subunit protein uL14m (mrpl14) (Dictyostelium discoideum (Social amoeba)).